We begin with the raw amino-acid sequence, 193 residues long: Ribonuclease HII (193 aa).

An RNase H type-2 domain is found at 15–193; that stretch reads YIVAGVDEAG…SYHRKSFKFC (179 aa). Residues D21, E22, and D112 each contribute to the a divalent metal cation site.

It belongs to the RNase HII family. The cofactor is Mn(2+). Mg(2+) is required as a cofactor.

The protein resides in the cytoplasm. It carries out the reaction Endonucleolytic cleavage to 5'-phosphomonoester.. In terms of biological role, endonuclease that specifically degrades the RNA of RNA-DNA hybrids. This Rickettsia typhi (strain ATCC VR-144 / Wilmington) protein is Ribonuclease HII.